Here is a 607-residue protein sequence, read N- to C-terminus: Guanine nucleotide-binding protein-like 1 (607 aa).

Residues Met1–Lys14 show a composition bias toward basic residues. Residues Met1 to Tyr81 form a disordered region. The span at Gln15–Leu26 shows a compositional bias: basic and acidic residues. Phosphoserine occurs at positions 32, 33, and 34. 2 positions are modified to phosphothreonine: Thr48 and Thr50. Phosphoserine occurs at positions 51 and 68. Residues Trp178–Pro418 enclose the CP-type G domain. Asn225–Asp228 provides a ligand contact to GTP. Phosphoserine is present on Ser324. Residues Gly367 to Ser374 and Asp411 to Leu415 each bind GTP. The interval Gly547–Cys607 is disordered. Residues Gly550–Thr584 show a composition bias toward acidic residues. A phosphoserine mark is found at Ser561, Ser562, and Ser563.

Belongs to the TRAFAC class YlqF/YawG GTPase family.

Functionally, possible regulatory or functional link with the histocompatibility cluster. This is Guanine nucleotide-binding protein-like 1 (GNL1) from Pongo abelii (Sumatran orangutan).